A 502-amino-acid chain; its full sequence is Hexokinase-4 (502 aa).

The chain crosses the membrane as a helical span at residues 4 to 24 (VLVMLTAAAAVVACSVATVMV). The Hexokinase domain occupies 35 to 491 (RRVVGLLKDL…SSIGSALLLA (457 aa)). Positions 90–228 (NGSETGTYYA…GLDIRVAALV (139 aa)) are hexokinase small subdomain. ADP contacts are provided by Gly-104 and Ser-105. D-glucose is bound by residues Thr-194, Lys-195, Asn-229, and Asp-230. A hexokinase large subdomain region spans residues 229–480 (NDTVGALSFG…QHVVVKAMED (252 aa)). ADP is bound at residue Thr-253. The D-glucose site is built by Asn-256, Glu-284, and Glu-315. ADP is bound at residue Gly-445.

Belongs to the hexokinase family.

It is found in the mitochondrion outer membrane. It carries out the reaction a D-hexose + ATP = a D-hexose 6-phosphate + ADP + H(+). The enzyme catalyses D-fructose + ATP = D-fructose 6-phosphate + ADP + H(+). It catalyses the reaction D-glucose + ATP = D-glucose 6-phosphate + ADP + H(+). It functions in the pathway carbohydrate metabolism; hexose metabolism. The protein operates within carbohydrate degradation; glycolysis; D-glyceraldehyde 3-phosphate and glycerone phosphate from D-glucose: step 1/4. Functionally, fructose and glucose phosphorylating enzyme. May be involved in the phosphorylation of glucose during the export from mitochondrion to cytosol. The polypeptide is Hexokinase-4 (Arabidopsis thaliana (Mouse-ear cress)).